We begin with the raw amino-acid sequence, 268 residues long: GTP cyclohydrolase FolE2 (268 aa).

This sequence belongs to the GTP cyclohydrolase IV family.

It catalyses the reaction GTP + H2O = 7,8-dihydroneopterin 3'-triphosphate + formate + H(+). The protein operates within cofactor biosynthesis; 7,8-dihydroneopterin triphosphate biosynthesis; 7,8-dihydroneopterin triphosphate from GTP: step 1/1. Functionally, converts GTP to 7,8-dihydroneopterin triphosphate. In Methylococcus capsulatus (strain ATCC 33009 / NCIMB 11132 / Bath), this protein is GTP cyclohydrolase FolE2.